A 357-amino-acid chain; its full sequence is DNA integrity scanning protein DisA (357 aa).

The DAC domain occupies 9–147 (DRKLLEILKT…DDIKYILRDS (139 aa)). ATP is bound by residues Gly-76, Leu-94, and 107–111 (TRHRT).

Belongs to the DisA family. In terms of assembly, homooctamer. Mg(2+) serves as cofactor.

It carries out the reaction 2 ATP = 3',3'-c-di-AMP + 2 diphosphate. Participates in a DNA-damage check-point that is active prior to asymmetric division when DNA is damaged. DisA forms globular foci that rapidly scan along the chromosomes during sporulation, searching for lesions. When a lesion is present, DisA pauses at the lesion site. This triggers a cellular response that culminates in a temporary block in sporulation initiation. Functionally, also has diadenylate cyclase activity, catalyzing the condensation of 2 ATP molecules into cyclic di-AMP (c-di-AMP). c-di-AMP acts as a signaling molecule that couples DNA integrity with progression of sporulation. The rise in c-di-AMP level generated by DisA while scanning the chromosome, operates as a positive signal that advances sporulation; upon encountering a lesion, the DisA focus arrests at the damaged site and halts c-di-AMP synthesis. The chain is DNA integrity scanning protein DisA from Clostridium acetobutylicum (strain ATCC 824 / DSM 792 / JCM 1419 / IAM 19013 / LMG 5710 / NBRC 13948 / NRRL B-527 / VKM B-1787 / 2291 / W).